The primary structure comprises 199 residues: Probable cobalt-precorrin-6B C(15)-methyltransferase (decarboxylating) (199 aa).

Residues Thr24, 48–52, Asp72, and Ala101 each bind S-adenosyl-L-methionine; that span reads GCGTG.

Belongs to the methyltransferase superfamily. Archaeal-type CbiT family.

It carries out the reaction Co-precorrin-6B + S-adenosyl-L-methionine = Co-precorrin-7 + S-adenosyl-L-homocysteine + CO2. It functions in the pathway cofactor biosynthesis; adenosylcobalamin biosynthesis; cob(II)yrinate a,c-diamide from sirohydrochlorin (anaerobic route): step 8/10. In terms of biological role, catalyzes the methylation of C-15 in cobalt-precorrin-6B followed by the decarboxylation of C-12 to form cobalt-precorrin-7. This is Probable cobalt-precorrin-6B C(15)-methyltransferase (decarboxylating) from Saccharolobus islandicus (strain Y.N.15.51 / Yellowstone #2) (Sulfolobus islandicus).